Here is a 631-residue protein sequence, read N- to C-terminus: 1-deoxy-D-xylulose-5-phosphate synthase (631 aa).

Thiamine diphosphate contacts are provided by residues H87 and 128–130 (GHS). D159 serves as a coordination point for Mg(2+). Residues 160 to 161 (GA), N188, F295, and E377 contribute to the thiamine diphosphate site. Residue N188 coordinates Mg(2+).

It belongs to the transketolase family. DXPS subfamily. As to quaternary structure, homodimer. The cofactor is Mg(2+). Thiamine diphosphate is required as a cofactor.

It carries out the reaction D-glyceraldehyde 3-phosphate + pyruvate + H(+) = 1-deoxy-D-xylulose 5-phosphate + CO2. The protein operates within metabolic intermediate biosynthesis; 1-deoxy-D-xylulose 5-phosphate biosynthesis; 1-deoxy-D-xylulose 5-phosphate from D-glyceraldehyde 3-phosphate and pyruvate: step 1/1. In terms of biological role, catalyzes the acyloin condensation reaction between C atoms 2 and 3 of pyruvate and glyceraldehyde 3-phosphate to yield 1-deoxy-D-xylulose-5-phosphate (DXP). In Pseudomonas putida (strain GB-1), this protein is 1-deoxy-D-xylulose-5-phosphate synthase.